The chain runs to 518 residues: Cytochrome P450 monooxygenase COX1 (518 aa).

Residues 7–25 form a helical membrane-spanning segment; sequence VLIALSSIVVAYFVKTALA. N-linked (GlcNAc...) asparagine glycans are attached at residues Asn-48, Asn-100, Asn-292, Asn-302, and Asn-351. Cys-450 is a heme binding site. The N-linked (GlcNAc...) asparagine glycan is linked to Asn-457.

Belongs to the cytochrome P450 family. Heme is required as a cofactor.

It is found in the membrane. It functions in the pathway secondary metabolite biosynthesis. Functionally, cytochrome P450 monooxygenase; part of the gene cluster that mediates the biosynthesis of alpha-cuprenene and oxidized derivatives. The alpha-cuprenene synthase COP6 is the only sesquiterpene synthase identified in C.cinereus that appears to be part of a biosynthetic gene cluster and is highly specific since it catalyzes the cyclization of (2E,6E)-farnesyl diphosphate into only one product, alpha-cuprenene. The cytochrome P450 monooxygenase COX2 then oxidizes the cyclohexadiene ring of alpha-cuprenene at positions 1 and 4, yielding first alpha-cuparene, followed by alpha-cuparophenol and a further yet unidentified compound resulting from one additional oxidation step. The cytochrome P450 monooxygenase COX1 then likely catalyzes the oxidation at position 9 of the pentane ring of alpha-cuprenene to give the corresponding hydroxy or ketone derivatives. The sequence is that of Cytochrome P450 monooxygenase COX1 from Coprinopsis cinerea (strain Okayama-7 / 130 / ATCC MYA-4618 / FGSC 9003) (Inky cap fungus).